The following is a 350-amino-acid chain: tRNA uridine(34) hydroxylase (350 aa).

The Rhodanese domain maps to 146–240 (DDPDALFIDM…YARKAREQGL (95 aa)). The Cysteine persulfide intermediate role is filled by Cys200.

It belongs to the TrhO family.

The catalysed reaction is uridine(34) in tRNA + AH2 + O2 = 5-hydroxyuridine(34) in tRNA + A + H2O. In terms of biological role, catalyzes oxygen-dependent 5-hydroxyuridine (ho5U) modification at position 34 in tRNAs, the first step in 5-carboxymethoxyuridine (cmo5U) biosynthesis. May be part of an alternate pathway, which is able to bypass cmo5U biogenesis in a subset of tRNAs under aerobic conditions. The polypeptide is tRNA uridine(34) hydroxylase (Escherichia coli (strain SE11)).